The primary structure comprises 82 residues: Small ribosomal subunit protein bS16 (82 aa).

It belongs to the bacterial ribosomal protein bS16 family.

The polypeptide is Small ribosomal subunit protein bS16 (Dehalococcoides mccartyi (strain ATCC BAA-2100 / JCM 16839 / KCTC 5957 / BAV1)).